The sequence spans 979 residues: UPF0182 protein Rv0064 (979 aa).

7 consecutive transmembrane segments (helical) span residues 19–41 (LVTAGMGMLALLLFGPRLVDIYV), 63–85 (LAIVAAVALVVAGIVLAALLLAY), 114–136 (LFGWGIAVTLGVVCGLIASFDWV), 174–196 (WLFVAVVLAFLASLLTHYLFGGL), 208–230 (AARVQLAVFAGAVVLLKAVAYWL), 261–280 (LVLVAIAVLCAVSFFTAIFL), and 285–307 (IPAMAAALLVLSAILVGGLWPLL). Positions 898-948 (GTGRVATARGGDAASAPPPGAGGPAPPQAVPPPRTTQPPAAPPRGPDVPPA) are disordered. The segment covering 913–946 (APPPGAGGPAPPQAVPPPRTTQPPAAPPRGPDVP) has biased composition (pro residues).

The protein belongs to the UPF0182 family.

It is found in the cell membrane. The chain is UPF0182 protein Rv0064 from Mycobacterium tuberculosis (strain ATCC 25618 / H37Rv).